Reading from the N-terminus, the 531-residue chain is 4-hydroxyphenylacetaldehyde oxime monooxygenase (531 aa).

The helical transmembrane segment at W18–S38 threads the bilayer. R122, R151, R466, and C468 together coordinate heme b.

It belongs to the cytochrome P450 family. It depends on heme b as a cofactor.

It localises to the endoplasmic reticulum membrane. The enzyme catalyses (E)-4-hydroxyphenylacetaldehyde oxime + reduced [NADPH--hemoprotein reductase] + O2 = (S)-4-hydroxymandelonitrile + oxidized [NADPH--hemoprotein reductase] + 2 H2O + H(+). It catalyses the reaction (E)-4-hydroxyphenylacetaldehyde oxime = (Z)-(4-hydroxyphenyl)acetaldehyde oxime. It carries out the reaction (Z)-(4-hydroxyphenyl)acetaldehyde oxime = 4-hydroxyphenylacetonitrile + H2O. The catalysed reaction is 4-hydroxyphenylacetonitrile + reduced [NADPH--hemoprotein reductase] + O2 = (S)-4-hydroxymandelonitrile + oxidized [NADPH--hemoprotein reductase] + H2O + H(+). Its pathway is secondary metabolite biosynthesis; dhurrin biosynthesis; dhurrin from L-tyrosine: step 2/3. Its function is as follows. Cytochrome P450 involved in the biosynthesis of the cyanogenic glucoside dhurrin. Catalyzes the conversion of p-hydroxyphenylacetaldoxime to p-hydroxymandelonitrile via three different and successive activities: isomerization of the (E) isomer to the (Z) isomer of p-hydroxyphenylacetaldoxime, followed by dehydration of the oxime to the corresponding nitrile, and C-hydroxylation of the nitrile to produce p-hydroxymandelonitrile. This is 4-hydroxyphenylacetaldehyde oxime monooxygenase from Sorghum bicolor (Sorghum).